The following is a 247-amino-acid chain: Phosphoribosylaminoimidazole-succinocarboxamide synthase (247 aa).

The protein belongs to the SAICAR synthetase family.

It carries out the reaction 5-amino-1-(5-phospho-D-ribosyl)imidazole-4-carboxylate + L-aspartate + ATP = (2S)-2-[5-amino-1-(5-phospho-beta-D-ribosyl)imidazole-4-carboxamido]succinate + ADP + phosphate + 2 H(+). It participates in purine metabolism; IMP biosynthesis via de novo pathway; 5-amino-1-(5-phospho-D-ribosyl)imidazole-4-carboxamide from 5-amino-1-(5-phospho-D-ribosyl)imidazole-4-carboxylate: step 1/2. The sequence is that of Phosphoribosylaminoimidazole-succinocarboxamide synthase from Synechococcus sp. (strain JA-2-3B'a(2-13)) (Cyanobacteria bacterium Yellowstone B-Prime).